Here is a 914-residue protein sequence, read N- to C-terminus: MGCSPSTLPPAPSAGQTGERGSLPLDASEKDESRLFCIKLRRSRLRRCSCGGVTLQPPSDGNGSTAGDNLCGQVLLNPLQTKSEADYEKLSTGKKDSIVTVAALGNFTHSVVRRATGSTGTSGTSSSGGNSRPGHRKSSLALALTPEDEPMDVYQRNLMDLKYPTVLPPNPPLKALLVFHKSDSICEAITAACQRHQLDVTLVKSKEEALDTLQKSYATAQCYHLIIIDARSSKNLDAEHIARTIRHTHGHHLTTIIAVCKKSFFEKDDVLIALLDAGVNRCVAETTNLAMCSVELKQILHSIIRPHNVMSTQQALYTALHRLKEVVLITDDLLRIQYANRATERLLNMRLDEIISKQLEDIFVSDLSTISEQCKNIKEFDGILTVRRKSQEGIPMHVRVVPVACIGSAPTHLIFNFDVPGGQMDFIATLPQPKEAPRGSLHSVRRCSFDVRSIASDGLRRTSLAKLTSLPLEAPITKIINLLSQVQENCSADEARLIDKVLEFLKREGLYSPQMKEIRTDDPIATDLIGALLTGPSVYSSRRSSNDSIIRTGSSTRTAAIVPAKMKSNPIIMELLDESLSWDFDIFKLEEITDYHPLLYLGMEMFRRFDVFATLNIDENVCKAWLAVIEAHYRKSNTYHNSTHAADVMQATGAFITQLTNKDMLVMDRMEEATALIAAAAHDVDHPGRSSAFLCNSNDALAVLYNDLTVLENHHAAITFKLTLGDDKINIFKNLDKETYKSARSTIIDMILATEMTRHFEHLAKFVSVFGGEEPRDHNPQTDEETSILMRRMLIKVADVSNPARPMQFCIEWARRIAEEYFMQTDEEKQRHLPIVMPMFDRATCSIPKSQIGFIEYIIQDMMHAWESFIDMPQLITYMQINYSQWKKYDEQGVNTLAEIMAKQPPVGKMANSK.

Disordered stretches follow at residues 1 to 27 (MGCS…PLDA) and 113 to 138 (RRAT…HRKS). Positions 116 to 129 (TGSTGTSGTSSSGG) are enriched in low complexity. The region spanning 312–359 (TQQALYTALHRLKEVVLITDDLLRIQYANRATERLLNMRLDEIISKQL) is the PAS domain. The PDEase domain maps to 558–893 (TAAIVPAKMK…SQWKKYDEQG (336 aa)). His-640 (proton donor) is an active-site residue. The a divalent metal cation site is built by His-644, His-682, Asp-683, and Asp-799.

This sequence belongs to the cyclic nucleotide phosphodiesterase family. PDE8 subfamily. It depends on a divalent metal cation as a cofactor. As to expression, expressed in Malpighian tubules and head.

It carries out the reaction 3',5'-cyclic AMP + H2O = AMP + H(+). Its pathway is purine metabolism; 3',5'-cyclic AMP degradation; AMP from 3',5'-cyclic AMP: step 1/1. Hydrolyzes the second messenger cAMP, which is a key regulator of many important physiological processes. Involved in the positive regulation of MAP kinase signaling and in inhibiting oxidative stress-induced cell death. This is High affinity cAMP-specific and IBMX-insensitive 3',5'-cyclic phosphodiesterase 8 from Drosophila melanogaster (Fruit fly).